The chain runs to 410 residues: Interstrand DNA cross-link repair glycosylase (410 aa).

Positions 45 to 47 match the QXD; important for activity motif; it reads QID.

This sequence belongs to the DNA glycosylase AlkZ-like family.

Its function is as follows. DNA glycosylase involved in the repair of interstrand DNA cross-links (ICLs), which are highly toxic DNA lesions that covalently tether the opposing strands of DNA, thereby inhibiting essential cellular processes such as DNA replication and transcription. Acts by unhooking both sides of the ICLs, forming abasic (AP) sites on both strands. Unhooks ICLs derived from various cross-linking agents, including azinomycin B (AZB) and mechlorethamine, also known as nitrogen mustard (NM), protecting cells from the toxicity of these cross-linking agents. In vitro, also acts on monoadducts and can catalyze the excision of N7-methylguanine (7mGua) from an oligonucleotide containing N7-methyldeoxyguanosine (d7mG). Shows no unhooking activity toward FaPy-ICLs. The protein is Interstrand DNA cross-link repair glycosylase (ycaQ) of Escherichia coli (strain K12).